The following is a 441-amino-acid chain: 3-phosphoshikimate 1-carboxyvinyltransferase (441 aa).

The disordered stretch occupies residues 1 to 21 (MSANGPSHPARELKAGGSLSG). 3-phosphoshikimate-binding residues include Lys29, Ser30, and Arg34. Lys29 lines the phosphoenolpyruvate pocket. 2 residues coordinate phosphoenolpyruvate: Gly103 and Arg132. Ser177, Gln179, Asp328, and Lys355 together coordinate 3-phosphoshikimate. Gln179 is a binding site for phosphoenolpyruvate. Asp328 (proton acceptor) is an active-site residue. Phosphoenolpyruvate-binding residues include Arg359 and Arg401.

Belongs to the EPSP synthase family. In terms of assembly, monomer.

It is found in the cytoplasm. The catalysed reaction is 3-phosphoshikimate + phosphoenolpyruvate = 5-O-(1-carboxyvinyl)-3-phosphoshikimate + phosphate. The protein operates within metabolic intermediate biosynthesis; chorismate biosynthesis; chorismate from D-erythrose 4-phosphate and phosphoenolpyruvate: step 6/7. Catalyzes the transfer of the enolpyruvyl moiety of phosphoenolpyruvate (PEP) to the 5-hydroxyl of shikimate-3-phosphate (S3P) to produce enolpyruvyl shikimate-3-phosphate and inorganic phosphate. The polypeptide is 3-phosphoshikimate 1-carboxyvinyltransferase (Parasynechococcus marenigrum (strain WH8102)).